The following is a 677-amino-acid chain: High-affinity choline transport protein (677 aa).

Transmembrane regions (helical) follow at residues proline 15 to phenylalanine 35, phenylalanine 54 to cysteine 74, leucine 94 to valine 114, phenylalanine 144 to phenylalanine 164, isoleucine 196 to glutamine 216, alanine 233 to valine 253, valine 265 to leucine 285, tryptophan 319 to alanine 339, phenylalanine 350 to glycine 370, valine 412 to leucine 432, valine 452 to serine 472, and threonine 477 to tyrosine 497.

It belongs to the BCCT transporter (TC 2.A.15) family.

The protein localises to the cell inner membrane. It carries out the reaction choline(in) + H(+)(in) = choline(out) + H(+)(out). It functions in the pathway amine and polyamine biosynthesis; betaine biosynthesis via choline pathway. High-affinity uptake of choline driven by a proton-motive force. The chain is High-affinity choline transport protein (betT) from Escherichia coli O157:H7.